A 219-amino-acid chain; its full sequence is Probable GTP-binding protein EngB (219 aa).

An EngB-type G domain is found at 24-207; it reads VQPEIAFAGR…HALIESWVRP (184 aa). Residues 32-39, 59-63, 81-84, 148-151, and 186-188 each bind GTP; these read GRSNAGKS, GRTQH, DLPG, TKCD, and FSA. Serine 39 and threonine 61 together coordinate Mg(2+).

Belongs to the TRAFAC class TrmE-Era-EngA-EngB-Septin-like GTPase superfamily. EngB GTPase family. The cofactor is Mg(2+).

Its function is as follows. Necessary for normal cell division and for the maintenance of normal septation. In Burkholderia multivorans (strain ATCC 17616 / 249), this protein is Probable GTP-binding protein EngB.